We begin with the raw amino-acid sequence, 575 residues long: Physarolisin (575 aa).

The N-terminal stretch at 1 to 18 (MRLLSLLFLLGLATLSFA) is a signal peptide. The propeptide at 19 to 173 (VRSQWAQQGR…SIKNARTQVG (155 aa)) is removed in mature form. Residues 179–574 (YIVPYVIFDL…SKLLAFVQTL (396 aa)) enclose the Peptidase S53 domain. N200 is a glycosylation site (N-linked (GlcNAc...) asparagine). Catalysis depends on charge relay system residues E248 and D252. Residues N262, N307, N380, and N453 are each glycosylated (N-linked (GlcNAc...) asparagine). S484 functions as the Charge relay system in the catalytic mechanism. Residues D529, I530, G552, and D554 each contribute to the Ca(2+) site.

Ca(2+) is required as a cofactor. In terms of processing, autocatalytically processed. Post-translationally, N-glycosylated.

It catalyses the reaction Milk clotting activity. Preferential cleavage of 8-Gly-|-Ser-9 in B chain of insulin most rapidly, followed by 11-Leu-|-Val-12, 19-Cys(SO(3)H)-|-Gly and 24-Phe-|-Phe-25. No action on Ac-Phe-Tyr(I)2.. Its activity is regulated as follows. Inhibited by diisopropylfluorophosphate (DFP) and diazoacetyl-D,L-norleucine methyl ester (DAN). The protein is Physarolisin of Physarum polycephalum (Slime mold).